The primary structure comprises 591 residues: Protein NRT1/ PTR FAMILY 4.3 (591 aa).

A compositionally biased stretch (polar residues) spans 1–10 (MAEINKQSNK). The interval 1–38 (MAEINKQSNKWEQEEVSNENNWELAEEESVDWRGRPSN) is disordered. A run of 12 helical transmembrane segments spans residues 47–67 (AALFVLGLQAFEIMGIAAVGN), 85–105 (ANIVTNFVGTIFIFALLGGYL), 109–129 (FLGSFWTIIIFGFVELSGFIL), 157–177 (GFKAMIFFMALYLVALGSGCV), 204–224 (FNAAYFAFSMGELIALTLLVW), 233–253 (IGFGVSAAAMTMGIISLVSGT), 347–367 (LISLVPIFASTIVFNTILAQL), 395–415 (AIPYIMLIFLVPLYDSFLVPF), 429–449 (LTRIGIGLFLSTFSMVSAAML), 463–483 (ILSIFWITPQFLIFGISEMFT), 502–522 (FLMALTYCSYSFGFYFSSVLV), and 551–571 (LFYWLLAVLSLLNFLSYLFWS).

Belongs to the major facilitator superfamily. Proton-dependent oligopeptide transporter (POT/PTR) (TC 2.A.17) family. As to expression, expressed in flowers. Detected in roots and siliques.

Its subcellular location is the membrane. The protein is Protein NRT1/ PTR FAMILY 4.3 (NPF4.3) of Arabidopsis thaliana (Mouse-ear cress).